The sequence spans 553 residues: Vacuolar fusion protein MON1 homolog B (553 aa).

N-acetylmethionine is present on methionine 1. 2 disordered regions span residues 1-111 (MEAG…DEDW) and 534-553 (STPP…FTGL). A compositionally biased stretch (basic and acidic residues) spans 23–35 (FPREEAGDSERVH). Polar residues predominate over residues 52–72 (KDQPSSLLSPLPQTEAASSTC). The residue at position 57 (serine 57) is a Phosphoserine. Low complexity predominate over residues 78–95 (AAASDSSPPGEPESNSEG). Residues 96–108 (QGEDPDDGGDPSD) are compositionally biased toward acidic residues. A compositionally biased stretch (polar residues) spans 541–553 (ADQAPNNGLFTGL).

This sequence belongs to the MON1/SAND family. In terms of assembly, interacts with CCNT2; down-regulates CCNT2-mediated activation of viral promoters during herpes simplex virus 1/HHV-1 infection. Found in a complex with RMC1, CCZ1 MON1A and MON1B.

This chain is Vacuolar fusion protein MON1 homolog B (Mon1b), found in Mus musculus (Mouse).